Consider the following 238-residue polypeptide: Phosphoribosylaminoimidazole-succinocarboxamide synthase (238 aa).

The protein belongs to the SAICAR synthetase family.

The catalysed reaction is 5-amino-1-(5-phospho-D-ribosyl)imidazole-4-carboxylate + L-aspartate + ATP = (2S)-2-[5-amino-1-(5-phospho-beta-D-ribosyl)imidazole-4-carboxamido]succinate + ADP + phosphate + 2 H(+). The protein operates within purine metabolism; IMP biosynthesis via de novo pathway; 5-amino-1-(5-phospho-D-ribosyl)imidazole-4-carboxamide from 5-amino-1-(5-phospho-D-ribosyl)imidazole-4-carboxylate: step 1/2. In Persephonella marina (strain DSM 14350 / EX-H1), this protein is Phosphoribosylaminoimidazole-succinocarboxamide synthase.